Reading from the N-terminus, the 483-residue chain is ATP synthase subunit beta (483 aa).

167–174 (GGAGVGKT) contacts ATP.

It belongs to the ATPase alpha/beta chains family. F-type ATPases have 2 components, CF(1) - the catalytic core - and CF(0) - the membrane proton channel. CF(1) has five subunits: alpha(3), beta(3), gamma(1), delta(1), epsilon(1). CF(0) has three main subunits: a(1), b(2) and c(9-12). The alpha and beta chains form an alternating ring which encloses part of the gamma chain. CF(1) is attached to CF(0) by a central stalk formed by the gamma and epsilon chains, while a peripheral stalk is formed by the delta and b chains.

It localises to the cell membrane. It catalyses the reaction ATP + H2O + 4 H(+)(in) = ADP + phosphate + 5 H(+)(out). Its function is as follows. Produces ATP from ADP in the presence of a proton gradient across the membrane. The catalytic sites are hosted primarily by the beta subunits. This is ATP synthase subunit beta from Paenarthrobacter aurescens (strain TC1).